The chain runs to 254 residues: Nickel import ATP-binding protein NikD (254 aa).

The 240-residue stretch at 2 to 241 (PQQIELRNIA…PKHAVTRSLV (240 aa)) folds into the ABC transporter domain. 36–43 (GGSGSGKS) is a binding site for ATP.

The protein belongs to the ABC transporter superfamily. Nickel importer (TC 3.A.1.5.3) family. In terms of assembly, the complex is composed of two ATP-binding proteins (NikD and NikE), two transmembrane proteins (NikB and NikC) and a solute-binding protein (NikA).

The protein localises to the cell inner membrane. It catalyses the reaction Ni(2+)(out) + ATP + H2O = Ni(2+)(in) + ADP + phosphate + H(+). Part of the ABC transporter complex NikABCDE involved in nickel import. Responsible for energy coupling to the transport system. The sequence is that of Nickel import ATP-binding protein NikD from Escherichia coli (strain UTI89 / UPEC).